A 108-amino-acid chain; its full sequence is Probable 4-amino-4-deoxy-L-arabinose-phosphoundecaprenol flippase subunit ArnE (108 aa).

Helical transmembrane passes span 32–52, 58–78, and 85–105; these read PLLL…LVWL, VPVG…TLAA, and TLSL…AIMG. One can recognise an EamA domain in the interval 34–106; sequence LLWLGGSVLL…IVAGVAIMGS (73 aa).

It belongs to the ArnE family. In terms of assembly, heterodimer of ArnE and ArnF.

The protein localises to the cell inner membrane. The protein operates within bacterial outer membrane biogenesis; lipopolysaccharide biosynthesis. Functionally, translocates 4-amino-4-deoxy-L-arabinose-phosphoundecaprenol (alpha-L-Ara4N-phosphoundecaprenol) from the cytoplasmic to the periplasmic side of the inner membrane. The protein is Probable 4-amino-4-deoxy-L-arabinose-phosphoundecaprenol flippase subunit ArnE of Erwinia tasmaniensis (strain DSM 17950 / CFBP 7177 / CIP 109463 / NCPPB 4357 / Et1/99).